Reading from the N-terminus, the 148-residue chain is 3-hydroxyacyl-[acyl-carrier-protein] dehydratase FabZ (148 aa).

His47 is an active-site residue.

Belongs to the thioester dehydratase family. FabZ subfamily.

The protein localises to the cytoplasm. The enzyme catalyses a (3R)-hydroxyacyl-[ACP] = a (2E)-enoyl-[ACP] + H2O. In terms of biological role, involved in unsaturated fatty acids biosynthesis. Catalyzes the dehydration of short chain beta-hydroxyacyl-ACPs and long chain saturated and unsaturated beta-hydroxyacyl-ACPs. The polypeptide is 3-hydroxyacyl-[acyl-carrier-protein] dehydratase FabZ (Hydrogenobaculum sp. (strain Y04AAS1)).